The sequence spans 229 residues: Heptaprenylglyceryl phosphate synthase (229 aa).

Residue Lys12 participates in sn-glycerol 1-phosphate binding. Asp14 and Ser40 together coordinate Mg(2+). Sn-glycerol 1-phosphate contacts are provided by residues 159–164 (YLEYSG), Gly189, and 209–210 (GN).

It belongs to the GGGP/HepGP synthase family. Group I subfamily. In terms of assembly, homodimer. Mg(2+) serves as cofactor.

The catalysed reaction is sn-glycerol 1-phosphate + all-trans-heptaprenyl diphosphate = 3-heptaprenyl-sn-glycero-1-phosphate + diphosphate. The protein operates within membrane lipid metabolism; glycerophospholipid metabolism. Its function is as follows. Prenyltransferase that catalyzes in vivo the transfer of the heptaprenyl moiety of heptaprenyl pyrophosphate (HepPP; 35 carbon atoms) to the C3 hydroxyl of sn-glycerol-1-phosphate (G1P), producing heptaprenylglyceryl phosphate (HepGP). This reaction is an ether-bond-formation step in the biosynthesis of archaea-type G1P-based membrane lipids found in Bacillales. This chain is Heptaprenylglyceryl phosphate synthase, found in Bacillus cereus (strain ATCC 14579 / DSM 31 / CCUG 7414 / JCM 2152 / NBRC 15305 / NCIMB 9373 / NCTC 2599 / NRRL B-3711).